The primary structure comprises 284 residues: Diaminopimelate epimerase (284 aa).

The substrate site is built by Asn-20, Gln-53, and Asn-73. The active-site Proton donor is the Cys-82. Substrate contacts are provided by residues 83–84 (GN), Asn-167, Asn-200, and 218–219 (ER). Cys-227 (proton acceptor) is an active-site residue. 228 to 229 (GS) contributes to the substrate binding site.

Belongs to the diaminopimelate epimerase family. As to quaternary structure, homodimer.

Its subcellular location is the cytoplasm. It catalyses the reaction (2S,6S)-2,6-diaminopimelate = meso-2,6-diaminopimelate. The protein operates within amino-acid biosynthesis; L-lysine biosynthesis via DAP pathway; DL-2,6-diaminopimelate from LL-2,6-diaminopimelate: step 1/1. In terms of biological role, catalyzes the stereoinversion of LL-2,6-diaminopimelate (L,L-DAP) to meso-diaminopimelate (meso-DAP), a precursor of L-lysine and an essential component of the bacterial peptidoglycan. This is Diaminopimelate epimerase from Xanthomonas oryzae pv. oryzae (strain MAFF 311018).